The sequence spans 160 residues: Lipoprotein signal peptidase (160 aa).

A run of 3 helical transmembrane segments spans residues 5–25 (LVFF…KFII), 60–80 (IEWL…AFFI), and 84–104 (LPFL…AGTV). Active-site residues include Asp118 and Asp132. The helical transmembrane segment at 128–148 (FNIADSCLTVGVIGLLLLYIV) threads the bilayer.

The protein belongs to the peptidase A8 family.

Its subcellular location is the cell membrane. It catalyses the reaction Release of signal peptides from bacterial membrane prolipoproteins. Hydrolyzes -Xaa-Yaa-Zaa-|-(S,diacylglyceryl)Cys-, in which Xaa is hydrophobic (preferably Leu), and Yaa (Ala or Ser) and Zaa (Gly or Ala) have small, neutral side chains.. It functions in the pathway protein modification; lipoprotein biosynthesis (signal peptide cleavage). Its function is as follows. This protein specifically catalyzes the removal of signal peptides from prolipoproteins. The protein is Lipoprotein signal peptidase of Dehalococcoides mccartyi (strain ATCC BAA-2100 / JCM 16839 / KCTC 5957 / BAV1).